The chain runs to 139 residues: ATP synthase epsilon chain (139 aa).

The protein belongs to the ATPase epsilon chain family. In terms of assembly, F-type ATPases have 2 components, CF(1) - the catalytic core - and CF(0) - the membrane proton channel. CF(1) has five subunits: alpha(3), beta(3), gamma(1), delta(1), epsilon(1). CF(0) has three main subunits: a, b and c.

The protein resides in the cell inner membrane. Its function is as follows. Produces ATP from ADP in the presence of a proton gradient across the membrane. This chain is ATP synthase epsilon chain, found in Pectobacterium carotovorum subsp. carotovorum (strain PC1).